The chain runs to 1507 residues: Protein similar (1507 aa).

The interval 1–85 (MVSLIDTIEA…KSRDAARCRR (85 aa)) is disordered. Residues 26-49 (SASSSSCSSSFSSSPPSSSVGSPS) show a composition bias toward low complexity. The span at 72-85 (KRKEKSRDAARCRR) shows a compositional bias: basic and acidic residues. Positions 72–125 (KRKEKSRDAARCRRSKETEIFMELSAALPLKTDDVNQLDKASVMRITIAFLKIR) constitute a bHLH domain. 2 PAS domains span residues 167–240 (NGAE…LAQK) and 307–377 (PHPS…LSKG). The region spanning 381-422 (TSRYRFLGKYGGYCWILSQATIVYDKLKPQSVVCVNYVISNL) is the PAC domain. Disordered stretches follow at residues 433–459 (QQTAASEQKEQHHQAAETEKEPEKAAD), 541–588 (HSPG…PPPT), 706–832 (TCST…CSPN), and 900–951 (YAGN…QAAV). A compositionally biased stretch (basic and acidic residues) spans 439–459 (EQKEQHHQAAETEKEPEKAAD). Residues 548–559 (ITAQLLSGSSSG) show a composition bias toward polar residues. A compositionally biased stretch (pro residues) spans 578–588 (SPAPPLTPPPT). The ODD stretch occupies residues 692–863 (TCLLPEDINS…IDDDMPLLTE (172 aa)). Over residues 706 to 717 (TCSTTASGQHYQ) the composition is skewed to polar residues. Composition is skewed to low complexity over residues 718-745 (SPSSSSTSAPSNTSSSNNSYANSPLSPL) and 754-777 (SNPSHQQQQQHHNQQQQQQQQQQH). Over residues 803-818 (DTSCSQHLHSPSITSK) the composition is skewed to polar residues. Low complexity-rich tracts occupy residues 823–832 (SSLPSLCSPN), 907–918 (QQQQQQPQLQQQ), and 926–951 (SSPASTVSSLSPSPVQQHHQQQQAAV). A coiled-coil region spans residues 880-908 (KEIDAIQQQLQQLQQQHHQQYAGNTGYQQ). Coiled coils occupy residues 982-1054 (AEEC…YDVQ) and 1110-1162 (QLLQ…QLQQ). 3 disordered regions span residues 1204 to 1228 (PQQQQHGNKRHLNSATGAGNPVESK), 1251 to 1287 (KDPAQQQTQAAKRAGSERWQLSAESKQQKQQQQQSNS), and 1356 to 1460 (FGGS…KTSI). The span at 1413–1423 (SSTSNSTNQAE) shows a compositional bias: polar residues.

Efficient DNA binding requires dimerization with another bHLH protein. Interacts with Vhl. Ubiquitously expressed in the embryo.

Its subcellular location is the cytoplasm. The protein localises to the nucleus. Its function is as follows. Functions as a transcriptional regulator of the adaptive response to hypoxia. Binds to core DNA sequence 5'-[AG]CGTG-3' within the hypoxia response element (HRE) of target gene promoters. This is Protein similar (sima) from Drosophila melanogaster (Fruit fly).